The primary structure comprises 122 residues: Small ribosomal subunit protein uS13 (122 aa).

Residues 99 to 122 (RGQRTHTNARTRKGPAKAIAGKKK) form a disordered region.

This sequence belongs to the universal ribosomal protein uS13 family. In terms of assembly, part of the 30S ribosomal subunit. Forms a loose heterodimer with protein S19. Forms two bridges to the 50S subunit in the 70S ribosome.

Located at the top of the head of the 30S subunit, it contacts several helices of the 16S rRNA. In the 70S ribosome it contacts the 23S rRNA (bridge B1a) and protein L5 of the 50S subunit (bridge B1b), connecting the 2 subunits; these bridges are implicated in subunit movement. Contacts the tRNAs in the A and P-sites. The polypeptide is Small ribosomal subunit protein uS13 (Rhizobium meliloti (strain 1021) (Ensifer meliloti)).